A 743-amino-acid chain; its full sequence is Adhesion defective protein 2 (743 aa).

The interval 1-36 (MADPGLRSGVGLPSQQGQKHDLQKDQKQPHVNNADR) is disordered. A compositionally biased stretch (basic and acidic residues) spans 18–28 (QKHDLQKDQKQ). The LisH domain maps to 38–70 (TQSLLNSYIYDYLIKKDYCEAARAFGREAQVQT). 4 disordered regions span residues 79-127 (NSLA…PPPP), 264-361 (LQSV…QYPV), 379-426 (RNPH…YGFS), and 476-692 (KERK…KSSD). Ser89 is subject to Phosphoserine. Over residues 98-114 (ISNNESSDENMNVNNGN) the composition is skewed to polar residues. Positions 264-281 (LQSVQQQQKQHQQKKTPQ) are enriched in low complexity. Composition is skewed to polar residues over residues 282 to 297 (SGST…QPTT), 315 to 353 (IPSS…DTTG), 390 to 399 (PSSTLPQQQK), 408 to 426 (QQPS…YGFS), and 482 to 500 (TSAS…SSVA). Low complexity predominate over residues 501–520 (KTKSTTPKSTDTPTEATTSP). Composition is skewed to polar residues over residues 521–544 (VKVS…NMPM) and 556–566 (DHPSNYSNLIE). Residues 567-578 (NSSTSDTNNADN) show a composition bias toward low complexity. Over residues 586 to 602 (WQLQQTHSSRPTPNASS) the composition is skewed to polar residues. A compositionally biased stretch (low complexity) spans 612-631 (PSSANSNAPTPAPTVNTTNP). Polar residues predominate over residues 661-670 (DNQNQSGKSN). Positions 671–688 (PDTSATPSAPTESTTVAT) are enriched in low complexity.

It belongs to the FLO8 family.

It localises to the cytoplasm. The protein localises to the nucleus. In terms of biological role, probable transcriptional regulator involved in cell adhesion. The polypeptide is Adhesion defective protein 2 (adn2) (Schizosaccharomyces pombe (strain 972 / ATCC 24843) (Fission yeast)).